A 133-amino-acid chain; its full sequence is Profilin Sal k 4.0201 (133 aa).

Cys95 and Cys117 are disulfide-bonded.

Belongs to the profilin family. Occurs in many kinds of cells as a complex with monomeric actin in a 1:1 ratio. Expressed in pollen (at protein and mRNA level).

It is found in the cytoplasm. Its subcellular location is the cytoskeleton. Functionally, binds to actin and affects the structure of the cytoskeleton. At high concentrations, profilin prevents the polymerization of actin, whereas it enhances it at low concentrations. This is Profilin Sal k 4.0201 from Kali turgidum (Prickly saltwort).